The following is a 253-amino-acid chain: NAD-dependent protein deacylase 2 (253 aa).

A Deacetylase sirtuin-type domain is found at 1 to 252 (MEDEIRKAAE…VEEVKRLRSE (252 aa)). Residues 23-42 (GAGI…DGLW) and 100-103 (QNID) contribute to the NAD(+) site. Residue His-118 is the Proton acceptor of the active site. Zn(2+) contacts are provided by Cys-126, Cys-129, Cys-150, and Cys-153. NAD(+)-binding positions include 191-193 (GSS), 217-219 (NAE), and Ala-235.

The protein belongs to the sirtuin family. Class III subfamily. Requires Zn(2+) as cofactor.

Its subcellular location is the cytoplasm. The catalysed reaction is N(6)-acetyl-L-lysyl-[protein] + NAD(+) + H2O = 2''-O-acetyl-ADP-D-ribose + nicotinamide + L-lysyl-[protein]. NAD-dependent protein deacetylase which modulates the activities of several proteins which are inactive in their acetylated form. Deacetylates the N-terminal lysine residue of Alba, the major archaeal chromatin protein and that, in turn, increases Alba's DNA binding affinity, thereby repressing transcription. In Archaeoglobus fulgidus (strain ATCC 49558 / DSM 4304 / JCM 9628 / NBRC 100126 / VC-16), this protein is NAD-dependent protein deacylase 2.